Reading from the N-terminus, the 241-residue chain is Small ribosomal subunit protein uS3 (241 aa).

The KH type-2 domain maps to 39–107; that stretch reads IRKYLEKELK…ETHLNIVEVR (69 aa). A disordered region spans residues 214-241; sequence ASERRATEGDAAHGGGGDRERGRRRENA.

It belongs to the universal ribosomal protein uS3 family. In terms of assembly, part of the 30S ribosomal subunit. Forms a tight complex with proteins S10 and S14.

Binds the lower part of the 30S subunit head. Binds mRNA in the 70S ribosome, positioning it for translation. The polypeptide is Small ribosomal subunit protein uS3 (Mesorhizobium japonicum (strain LMG 29417 / CECT 9101 / MAFF 303099) (Mesorhizobium loti (strain MAFF 303099))).